The following is a 92-amino-acid chain: Small ribosomal subunit protein uS19 (92 aa).

Belongs to the universal ribosomal protein uS19 family.

Its function is as follows. Protein S19 forms a complex with S13 that binds strongly to the 16S ribosomal RNA. This chain is Small ribosomal subunit protein uS19, found in Crocosphaera subtropica (strain ATCC 51142 / BH68) (Cyanothece sp. (strain ATCC 51142)).